A 298-amino-acid chain; its full sequence is ATP synthase F(1) complex subunit gamma, mitochondrial (298 aa).

A mitochondrion-targeting transit peptide spans 1–25 (MFSRAGVAGLSAWTVQPQWIQVRNM). Lys39 is modified (N6-acetyllysine). The residue at position 49 (Lys49) is an N6-succinyllysine. Lys55 bears the N6-acetyllysine mark. N6-acetyllysine; alternate is present on Lys115. At Lys115 the chain carries N6-succinyllysine; alternate. The residue at position 146 (Ser146) is a Phosphoserine. N6-acetyllysine; alternate is present on Lys154. At Lys154 the chain carries N6-succinyllysine; alternate. Position 197 is an N6-acetyllysine (Lys197). An N6-succinyllysine modification is found at Lys270.

The protein belongs to the ATPase gamma chain family. As to quaternary structure, component of the ATP synthase complex composed at least of ATP5F1A/subunit alpha, ATP5F1B/subunit beta, ATP5MC1/subunit c (homooctomer), MT-ATP6/subunit a, MT-ATP8/subunit 8, ATP5ME/subunit e, ATP5MF/subunit f, ATP5MG/subunit g, ATP5MK/subunit k, ATP5MJ/subunit j, ATP5F1C/subunit gamma, ATP5F1D/subunit delta, ATP5F1E/subunit epsilon, ATP5PF/subunit F6, ATP5PB/subunit b, ATP5PD/subunit d, ATP5PO/subunit OSCP. ATP synthase complex consists of a soluble F(1) head domain (subunits alpha(3) and beta(3)) - the catalytic core - and a membrane F(0) domain - the membrane proton channel (subunits c, a, 8, e, f, g, k and j). These two domains are linked by a central stalk (subunits gamma, delta, and epsilon) rotating inside the F1 region and a stationary peripheral stalk (subunits F6, b, d, and OSCP). Interacts with FLVCR2; this interaction occurs in the absence of heme and is disrupted upon heme binding.

It localises to the mitochondrion inner membrane. Functionally, subunit gamma, of the mitochondrial membrane ATP synthase complex (F(1)F(0) ATP synthase or Complex V) that produces ATP from ADP in the presence of a proton gradient across the membrane which is generated by electron transport complexes of the respiratory chain. ATP synthase complex consist of a soluble F(1) head domain - the catalytic core - and a membrane F(1) domain - the membrane proton channel. These two domains are linked by a central stalk rotating inside the F(1) region and a stationary peripheral stalk. During catalysis, ATP synthesis in the catalytic domain of F(1) is coupled via a rotary mechanism of the central stalk subunits to proton translocation. In vivo, can only synthesize ATP although its ATP hydrolase activity can be activated artificially in vitro. With the central stalk subunit delta, is essential for the biogenesis of F(1) catalytic part of the ATP synthase complex namely in the formation of F1 assembly intermediate. The polypeptide is ATP synthase F(1) complex subunit gamma, mitochondrial (Bos taurus (Bovine)).